The following is a 206-amino-acid chain: Large ribosomal subunit protein mL62 (206 aa).

The transit peptide at 1 to 29 (MATAWGLRWGLSRTGTLLLAPPARCARRA) directs the protein to the mitochondrion. Gln-90 bears the N5-methylglutamine mark.

Belongs to the prokaryotic/mitochondrial release factor family. Mitochondrion-specific ribosomal protein mL62 subfamily. Component of the mitochondrial ribosome large subunit (39S) which comprises a 16S rRNA and about 50 distinct proteins. In terms of processing, methylation of glutamine in the GGQ triplet by HEMK1.

It is found in the mitochondrion. It catalyses the reaction an N-acyl-L-alpha-aminoacyl-tRNA + H2O = an N-acyl-L-amino acid + a tRNA + H(+). Its function is as follows. Essential peptidyl-tRNA hydrolase component of the mitochondrial large ribosomal subunit. Acts as a codon-independent translation release factor that has lost all stop codon specificity and directs the termination of translation in mitochondrion, possibly in case of abortive elongation. May be involved in the hydrolysis of peptidyl-tRNAs that have been prematurely terminated and thus in the recycling of stalled mitochondrial ribosomes. In Mus musculus (Mouse), this protein is Large ribosomal subunit protein mL62.